A 501-amino-acid polypeptide reads, in one-letter code: ATP synthase subunit alpha, chloroplastic (501 aa).

An ATP-binding site is contributed by 170 to 177; that stretch reads GDRQTGKT.

Belongs to the ATPase alpha/beta chains family. F-type ATPases have 2 components, CF(1) - the catalytic core - and CF(0) - the membrane proton channel. CF(1) has five subunits: alpha(3), beta(3), gamma(1), delta(1), epsilon(1). CF(0) has four main subunits: a, b, b' and c.

It localises to the plastid. Its subcellular location is the chloroplast thylakoid membrane. It catalyses the reaction ATP + H2O + 4 H(+)(in) = ADP + phosphate + 5 H(+)(out). In terms of biological role, produces ATP from ADP in the presence of a proton gradient across the membrane. The alpha chain is a regulatory subunit. In Nephroselmis olivacea (Green alga), this protein is ATP synthase subunit alpha, chloroplastic.